The following is a 107-amino-acid chain: Probable monothiol glutaredoxin 2 (107 aa).

A Glutaredoxin domain is found at 7 to 107 (LEFIQNAIKK…LEKMLKDVVV (101 aa)). Lys24 serves as a coordination point for glutathione. Residue Cys32 participates in [2Fe-2S] cluster binding. Glutathione contacts are provided by residues Arg61, Phe73, and 86–87 (CD).

It belongs to the glutaredoxin family. Monothiol subfamily.

This chain is Probable monothiol glutaredoxin 2 (grxC2), found in Rickettsia prowazekii (strain Madrid E).